Consider the following 285-residue polypeptide: Diphthine methyl ester synthase (285 aa).

S-adenosyl-L-methionine is bound by residues Leu9, Asp84, Gly87, 112–113 (SI), and Leu163. Phosphoserine is present on Ser171. S-adenosyl-L-methionine contacts are provided by Val225 and His250.

Belongs to the diphthine synthase family.

The enzyme catalyses 2-[(3S)-amino-3-carboxypropyl]-L-histidyl-[translation elongation factor 2] + 4 S-adenosyl-L-methionine = diphthine methyl ester-[translation elongation factor 2] + 4 S-adenosyl-L-homocysteine + 3 H(+). Its pathway is protein modification; peptidyl-diphthamide biosynthesis. Its function is as follows. S-adenosyl-L-methionine-dependent methyltransferase that catalyzes four methylations of the modified target histidine residue in translation elongation factor 2 (EF-2), to form an intermediate called diphthine methyl ester. The four successive methylation reactions represent the second step of diphthamide biosynthesis. In Bos taurus (Bovine), this protein is Diphthine methyl ester synthase (DPH5).